The primary structure comprises 385 residues: IGGIPAANAKCASHAGMTPAPHSSHPQAWGPLLQPPTVKTEPMDDGNFSKEQTSGFYSEGFHSASPSSSSKDSNGHSPRSSGSTREPSPFYDAMPLKAKANLGMHLDSFRNSLPYSLLTPPGFESRASDARDHSPSYESYSPRTLAPPAHVSHPLGRSDATPPKSPPRTPSSPERRSFDRFHDSGFDGVDHNKHDGDDGREGSGLEDDFDEEPGLRVPAVNSHGKVKTFKCKQCEFVAVTKLSFWEHSKEHIKPEKMLCCRKCPFVTEYKHHLEYHMRNHMGSKPFQCSQCSYSCVNKSMLNSHLKSHSNVYQYRCADCNYATKYCDSLKLHLRKYQHNPAMVLNLDGTPNPLPIIDVYGTRRGPKQKPLSKIFEQQTGTNNHSP.

Disordered regions lie at residues 1-94 and 124-216; these read IGGI…YDAM and ESRA…PGLR. Low complexity predominate over residues 63 to 77; the sequence is SASPSSSSKDSNGHS. 2 stretches are compositionally biased toward basic and acidic residues: residues 126–135 and 173–203; these read RASDARDHSP and PERR…REGS. 4 consecutive C2H2-type zinc fingers follow at residues 229-251, 258-280, 286-308, and 314-338; these read FKCK…SKEH, LCCR…MRNH, FQCS…LKSH, and YRCA…KYQH. A disordered region spans residues 361–385; sequence TRRGPKQKPLSKIFEQQTGTNNHSP. The span at 374–385 shows a compositional bias: polar residues; that stretch reads FEQQTGTNNHSP.

Belongs to the hunchback C2H2-type zinc-finger protein family.

Its subcellular location is the nucleus. In terms of biological role, gap class segmentation protein that controls development of head structures. The polypeptide is Protein hunchback (hb) (Bombyx mori (Silk moth)).